A 373-amino-acid chain; its full sequence is Ras association domain-containing protein 7 (373 aa).

The Ras-associating domain maps to 6–89 (AAMELKVWVD…VQFVLRRTGP (84 aa)). Positions 122 to 150 (CEPRKTLTPEPAPSLSRPGPAAPVTPTPG) are disordered. Coiled-coil stretches lie at residues 175-227 (WEQE…AAEA) and 248-297 (QERQ…QFIQ). The disordered stretch occupies residues 300 to 356 (GAALPPPPRPDRGPPGTQGPLPPAREESLLGAPSESHAGAQPRPRGGPHDAELLEVA).

As to quaternary structure, interacts with MAP2K7 and GTP-bound NRAS. In terms of processing, polyubiquitinated and degraded by the proteasome upon prolonged stress stimuli.

The protein resides in the cytoplasm. Its subcellular location is the cytoskeleton. It localises to the microtubule organizing center. It is found in the centrosome. In terms of biological role, negatively regulates stress-induced JNK activation and apoptosis by promoting MAP2K7 phosphorylation and inhibiting its ability to activate JNK. Following prolonged stress, anti-apoptotic effect stops because of degradation of RASSF7 protein via the ubiquitin-proteasome pathway. Required for the activation of AURKB and chromosomal congression during mitosis where it stimulates microtubule polymerization. The protein is Ras association domain-containing protein 7 (RASSF7) of Homo sapiens (Human).